The primary structure comprises 221 residues: GTP-binding nuclear protein Ran/TC4 (221 aa).

The region spanning 10-174 (DYPSFKLVIV…LYLARKLAGD (165 aa)) is the Small GTPase Ran-type domain. 21–28 (DGGTGKTT) serves as a coordination point for GTP. The tract at residues 40–48 (KKYEPTIGV) is switch-I. Residues glycine 71, 125-128 (NKVD), and 153-155 (SAK) each bind GTP. The segment at 71 to 87 (GQEKFGGLRDGYYIHGQ) is switch-II.

The protein belongs to the small GTPase superfamily. Ran family. In terms of assembly, found in a nuclear export complex with RanGTP, exportin and pre-miRNA.

It is found in the nucleus. In terms of biological role, GTP-binding protein involved in nucleocytoplasmic transport. Required for the import of protein into the nucleus and also for RNA export. Involved in chromatin condensation and control of cell cycle. This is GTP-binding nuclear protein Ran/TC4 from Vicia faba (Broad bean).